A 757-amino-acid polypeptide reads, in one-letter code: Primary amine oxidase (757 aa).

The signal sequence occupies residues 1-30 (MGSPSLYSARKTTLALAVALSFAWQAPVFA). Substrate is bound by residues 411–422 (YLDSGDYGMGTL) and 493–498 (VGNYDY). Catalysis depends on Asp413, which acts as the Proton acceptor. Catalysis depends on Tyr496, which acts as the Schiff-base intermediate with substrate; via topaquinone. Position 496 is a 2',4',5'-topaquinone (Tyr496). Residues His554 and His556 each coordinate Cu cation. Residues Asp563, Leu564, Asp565, Glu603, Tyr697, Asp700, Glu702, Asp708, and Ala709 each contribute to the Ca(2+) site. Asp563 provides a ligand contact to Mn(2+). A Mn(2+)-binding site is contributed by Asp565. The disordered stretch occupies residues 680–701 (PEGKYPNRSTHDTGLGQYSKDN). Residue Asp708 participates in Mn(2+) binding. His719 serves as a coordination point for Cu cation.

It belongs to the copper/topaquinone oxidase family. Homodimer. Cu cation serves as cofactor. The cofactor is Zn(2+). Requires Ca(2+) as cofactor. It depends on L-topaquinone as a cofactor. Mn(2+) is required as a cofactor. Post-translationally, topaquinone (TPQ) is generated by copper-dependent autoxidation of a specific tyrosyl residue.

It is found in the periplasm. It carries out the reaction a primary methyl amine + O2 + H2O = an aldehyde + H2O2 + NH4(+). It catalyses the reaction 2-phenylethylamine + O2 + H2O = 2-phenylacetaldehyde + H2O2 + NH4(+). It functions in the pathway amino-acid degradation; L-phenylalanine degradation; phenylacetate from L-phenylalanine: step 2/3. With respect to regulation, inhibited by 2-hydrazinopyridine. Its function is as follows. The enzyme prefers aromatic over aliphatic amines. This chain is Primary amine oxidase (tynA), found in Escherichia coli (strain K12).